The primary structure comprises 273 residues: GTP cyclohydrolase MptA (273 aa).

It belongs to the GTP cyclohydrolase IV family. As to quaternary structure, homodimer. Fe(2+) is required as a cofactor.

It carries out the reaction GTP + H2O = 7,8-dihydroneopterin 2',3'-cyclic phosphate + formate + diphosphate + H(+). It participates in cofactor biosynthesis; 5,6,7,8-tetrahydromethanopterin biosynthesis. In terms of biological role, converts GTP to 7,8-dihydro-D-neopterin 2',3'-cyclic phosphate, the first intermediate in the biosynthesis of coenzyme methanopterin. The sequence is that of GTP cyclohydrolase MptA from Picrophilus torridus (strain ATCC 700027 / DSM 9790 / JCM 10055 / NBRC 100828 / KAW 2/3).